The sequence spans 276 residues: uncharacterized protein (276 aa).

The N-terminal stretch at 1-16 (MELGLILMFASAFVSA) is a signal peptide. An N-linked (GlcNAc...) asparagine glycan is attached at Asn-265.

This is an uncharacterized protein from Encephalitozoon cuniculi (strain GB-M1) (Microsporidian parasite).